We begin with the raw amino-acid sequence, 398 residues long: 2-amino-3-ketobutyrate coenzyme A ligase (398 aa).

111–112 provides a ligand contact to pyridoxal 5'-phosphate; that stretch reads CF. Histidine 136 serves as a coordination point for substrate. Residues serine 185, 210 to 213, 241 to 244, and 274 to 275 each bind pyridoxal 5'-phosphate; these read DDSH, TLGK, and SN. Position 244 is an N6-(pyridoxal phosphate)lysine (lysine 244). Arginine 368 lines the substrate pocket.

It belongs to the class-II pyridoxal-phosphate-dependent aminotransferase family. Homodimer. Requires pyridoxal 5'-phosphate as cofactor.

It catalyses the reaction glycine + acetyl-CoA = (2S)-2-amino-3-oxobutanoate + CoA. Its pathway is amino-acid degradation; L-threonine degradation via oxydo-reductase pathway; glycine from L-threonine: step 2/2. Catalyzes the cleavage of 2-amino-3-ketobutyrate to glycine and acetyl-CoA. The sequence is that of 2-amino-3-ketobutyrate coenzyme A ligase from Escherichia coli (strain K12).